Reading from the N-terminus, the 163-residue chain is Transcriptional repressor NrdR (163 aa).

The segment at 3–34 (CPFCRHDDSRVVDSRTTDDGSSIRRRRQCPNC) is a zinc-finger region. The ATP-cone domain occupies 46 to 136 (LSVIKRSGAP…VYQAFDSLAD (91 aa)).

Belongs to the NrdR family. Zn(2+) is required as a cofactor.

In terms of biological role, negatively regulates transcription of bacterial ribonucleotide reductase nrd genes and operons by binding to NrdR-boxes. The chain is Transcriptional repressor NrdR from Kineococcus radiotolerans (strain ATCC BAA-149 / DSM 14245 / SRS30216).